We begin with the raw amino-acid sequence, 24 residues long: Pyruvate kinase (24 aa).

The protein belongs to the pyruvate kinase family. Homotetramer. Mg(2+) serves as cofactor. The cofactor is K(+).

The catalysed reaction is pyruvate + ATP = phosphoenolpyruvate + ADP + H(+). The protein operates within carbohydrate degradation; glycolysis; pyruvate from D-glyceraldehyde 3-phosphate: step 5/5. The protein is Pyruvate kinase (pyk) of Clostridium pasteurianum.